The chain runs to 494 residues: UPF0164 protein TP_0859/TP_0860 (494 aa).

Residues 1–44 form the signal peptide; the sequence is MVRRPCVSAAPVRVGGRLVFGFARVGSRGLCLGALLLSPRIVLA.

Belongs to the UPF0164 family.

This Treponema pallidum (strain Nichols) protein is UPF0164 protein TP_0859/TP_0860.